The primary structure comprises 347 residues: Selenide, water dikinase (347 aa).

Cys-17 is an active-site residue. ATP is bound by residues Lys-20 and 48–50; that span reads TRD. Mg(2+) is bound at residue Asp-51. ATP-binding positions include Asp-68, Asp-91, and 139–141; that span reads GHS. Asp-91 lines the Mg(2+) pocket. Residue Asp-227 coordinates Mg(2+).

It belongs to the selenophosphate synthase 1 family. Class I subfamily. As to quaternary structure, homodimer. Mg(2+) is required as a cofactor.

It catalyses the reaction hydrogenselenide + ATP + H2O = selenophosphate + AMP + phosphate + 2 H(+). Functionally, synthesizes selenophosphate from selenide and ATP. This is Selenide, water dikinase from Salmonella typhi.